The sequence spans 203 residues: Probable metallo-hydrolase MJ0296 (203 aa).

7 residues coordinate Zn(2+): histidine 86, histidine 88, aspartate 90, histidine 91, histidine 135, aspartate 152, and histidine 193.

It belongs to the metallo-beta-lactamase superfamily. Zn(2+) is required as a cofactor.

In Methanocaldococcus jannaschii (strain ATCC 43067 / DSM 2661 / JAL-1 / JCM 10045 / NBRC 100440) (Methanococcus jannaschii), this protein is Probable metallo-hydrolase MJ0296.